A 2988-amino-acid chain; its full sequence is NBPF family member NBPF14 (2988 aa).

Residues 75–119 (RQFKEEKLAEQLKQAEELRQYKVLVHSQERELTQLREKLREGRDA) are a coiled coil. Disordered stretches follow at residues 161–200 (KLSP…SKVP), 451–474 (EKVQ…PEDS), and 520–566 (WEDA…EGYS). The span at 165-177 (ENDEDEDEDVQVE) shows a compositional bias: acidic residues. 32 consecutive Olduvai domains span residues 165–259 (ENDE…NILP), 436–528 (ENDN…HIIP), 529–600 (ENES…VDIG), 601–692 (RHRW…PSCP), 695–750 (SREL…LDVD), 751–843 (RIKK…RSKK), 844–919 (ERRR…LDVD), 920–1012 (RIKK…RSKK), 1013–1105 (ERRR…PSCP), 1108–1163 (SREL…LDVD), 1164–1256 (RIKK…RSKK), 1257–1349 (ERRR…PSCP), 1352–1407 (SREL…LDVD), 1408–1500 (RIKK…RSKK), 1501–1593 (ERRR…PSCP), 1596–1651 (SREL…LDVD), 1652–1744 (RFKK…RSKK), 1745–1837 (ERRR…PSCP), 1840–1895 (SREL…LDVD), 1896–1988 (RIKK…RSKK), 1989–2081 (ERRR…PSCP), 2084–2139 (SREL…LDVD), 2140–2232 (RIKK…RSKK), 2233–2325 (ERRR…PSCP), 2328–2383 (SREL…LDVD), 2384–2476 (RIKK…RSKK), 2477–2569 (ERRR…PSCP), 2572–2627 (SREL…LDVD), 2628–2720 (RIKK…RSKK), 2721–2813 (ERRR…PSCP), 2816–2889 (SREL…RSKK), and 2890–2988 (ERRR…IFPQ). Over residues 190–200 (EVQKAEESKVP) the composition is skewed to basic and acidic residues. Acidic residues-rich tracts occupy residues 530–539 (NESDDEEEEE) and 550–562 (ESEE…ESWD). 3 disordered regions span residues 754 to 773 (KDEE…SREL), 828 to 871 (EKKG…LDEK), and 999 to 1038 (KGKG…ELLD). 2 stretches are compositionally biased toward basic residues: residues 831 to 849 (GKGK…RRGR) and 1000 to 1018 (GKGK…RRGR). Positions 1243-1282 (KGKGKKRRGRRSKKERRRGRKEGEEDQNPPCPRLSRELLD) are disordered. The span at 1244–1262 (GKGKKRRGRRSKKERRRGR) shows a compositional bias: basic residues. Positions 1487–1521 (KGKGKKRRGRRSKKERRRGRKEGEEDQNPPCPRLS) are disordered. Residues 1488–1506 (GKGKKRRGRRSKKERRRGR) show a composition bias toward basic residues. The tract at residues 1731–1770 (KGKGKKRRGRRSKKERRRGRKEGEEDQNPPCPRLSRELLD) is disordered. A compositionally biased stretch (basic residues) spans 1732 to 1750 (GKGKKRRGRRSKKERRRGR). The segment at 1975 to 2014 (KGKGKKRRGRRSKKERRRGRKEGEEDQNPPCPRLSRELLD) is disordered. The span at 1976–1994 (GKGKKRRGRRSKKERRRGR) shows a compositional bias: basic residues. A disordered region spans residues 2219–2258 (KGKGKKRRGRRSKKERRRGRKEGEEDQNPPCPRLSRELLD). Basic residues predominate over residues 2220–2238 (GKGKKRRGRRSKKERRRGR). The tract at residues 2463–2502 (KGKGKKRRGRRSKKERRRGRKEGEEDQNPPCPRLSRELLD) is disordered. The segment covering 2464 to 2482 (GKGKKRRGRRSKKERRRGR) has biased composition (basic residues). Disordered regions lie at residues 2707 to 2745 (KGKG…RELL) and 2877 to 2909 (GKGK…CPRL). 2 stretches are compositionally biased toward basic residues: residues 2708-2726 (GKGK…RRGR) and 2877-2895 (GKGK…RRGR).

The protein belongs to the NBPF family. In terms of tissue distribution, expressed in spleen and fetal liver.

Its subcellular location is the cytoplasm. The protein is NBPF family member NBPF14 of Homo sapiens (Human).